The sequence spans 982 residues: Probable beta-galactosidase C (982 aa).

Residues 1–21 (MRLFALLPVLLGLISSHFVSA) form the signal peptide. Substrate is bound by residues tyrosine 80, asparagine 125, alanine 126, glutamate 127, and asparagine 185. Residue glutamate 186 is the Proton donor of the active site. Tyrosine 249 serves as a coordination point for substrate. Cysteine 255 and cysteine 302 form a disulfide bridge. A glycan (N-linked (GlcNAc...) asparagine) is linked at asparagine 274. Glutamate 285 functions as the Nucleophile in the catalytic mechanism. Substrate is bound at residue tyrosine 351. Residues asparagine 389, asparagine 434, asparagine 600, asparagine 675, asparagine 718, and asparagine 785 are each glycosylated (N-linked (GlcNAc...) asparagine).

This sequence belongs to the glycosyl hydrolase 35 family.

The protein localises to the secreted. The catalysed reaction is Hydrolysis of terminal non-reducing beta-D-galactose residues in beta-D-galactosides.. In terms of biological role, cleaves beta-linked terminal galactosyl residues from gangliosides, glycoproteins, and glycosaminoglycans. The chain is Probable beta-galactosidase C (lacC) from Penicillium rubens (strain ATCC 28089 / DSM 1075 / NRRL 1951 / Wisconsin 54-1255) (Penicillium chrysogenum).